The sequence spans 360 residues: 3-isopropylmalate dehydrogenase (360 aa).

Positions 66-75 (RCHPARRRRR) are enriched in basic residues. The tract at residues 66–101 (RCHPARRRRRSEMGRHRPGHPPGARPAENPFATGPV) is disordered. Residues arginine 133 and aspartate 223 each contribute to the substrate site. The Mg(2+) site is built by aspartate 223, aspartate 247, and aspartate 251.

Belongs to the isocitrate and isopropylmalate dehydrogenases family. LeuB type 1 subfamily. In terms of assembly, homodimer. The cofactor is Mg(2+). Mn(2+) serves as cofactor.

Its subcellular location is the cytoplasm. It catalyses the reaction (2R,3S)-3-isopropylmalate + NAD(+) = 4-methyl-2-oxopentanoate + CO2 + NADH. It functions in the pathway amino-acid biosynthesis; L-leucine biosynthesis; L-leucine from 3-methyl-2-oxobutanoate: step 3/4. Functionally, catalyzes the oxidation of 3-carboxy-2-hydroxy-4-methylpentanoate (3-isopropylmalate) to 3-carboxy-4-methyl-2-oxopentanoate. The product decarboxylates to 4-methyl-2 oxopentanoate. The protein is 3-isopropylmalate dehydrogenase (leuB) of Azotobacter vinelandii.